We begin with the raw amino-acid sequence, 750 residues long: E3 ubiquitin-protein ligase rfwd3.S (750 aa).

The tract at residues 92–206 is disordered; the sequence is RQAAEQRSSV…GAAPPAEPAP (115 aa). Residues 105–116 are compositionally biased toward basic residues; sequence RVQRRSTRRHQR. A compositionally biased stretch (polar residues) spans 122-144; that stretch reads TAGTSSRAALSNFFQINRTQGVA. The segment covering 168-181 has biased composition (acidic residues); the sequence is SSDETVELSEEEEG. An RING-type; degenerate zinc finger spans residues 263-307; that stretch reads CAICFEPWTNAGQHRLSALRCGHLFGFTCIERWLKGGAAKCPQCN. A compositionally biased stretch (low complexity) spans 387–405; the sequence is TSMQASSSRSTISGSLSSS. The segment at 387–406 is disordered; that stretch reads TSMQASSSRSTISGSLSSSQ. 3 WD repeats span residues 470-510, 512-552, and 558-603; these read IHSK…VVQT, NTGR…NCVQ, and GSRC…YRPH.

Requires [4Fe-4S] cluster as cofactor.

It localises to the nucleus. The protein localises to the PML body. The protein resides in the cytoplasm. It carries out the reaction S-ubiquitinyl-[E2 ubiquitin-conjugating enzyme]-L-cysteine + [acceptor protein]-L-lysine = [E2 ubiquitin-conjugating enzyme]-L-cysteine + N(6)-ubiquitinyl-[acceptor protein]-L-lysine.. It functions in the pathway protein modification; protein ubiquitination. Functionally, E3 ubiquitin-protein ligase required for the repair of DNA interstrand cross-links (ICL) in response to DNA damage. Plays a key role in RPA-mediated DNA damage signaling and repair. Required to translesion DNA synthesis across DNA-protein cross-link adducts by catalyzing ubiquitination of proteins on single-stranded DNA (ssDNA). Mediates ubiquitination of the hmces DNA-protein cross-link, possibly promoting its degradation. This Xenopus laevis (African clawed frog) protein is E3 ubiquitin-protein ligase rfwd3.S (rfwd3.S).